A 229-amino-acid chain; its full sequence is Somatolactin (229 aa).

A signal peptide spans 1–21; that stretch reads MAALQEVLLAVLLWPVLVTIS. Disulfide bonds link C26-C36, C87-C203, and C220-C228. Residue N143 is glycosylated (N-linked (GlcNAc...) asparagine).

The protein belongs to the somatotropin/prolactin family. Pituitary gland.

It is found in the secreted. This is Somatolactin from Tetraodon miurus (Congo puffer).